A 399-amino-acid chain; its full sequence is Phosphoglycerate kinase (399 aa).

Substrate is bound by residues aspartate 21–asparagine 23, arginine 37, histidine 60–arginine 63, arginine 119, and arginine 152. ATP contacts are provided by residues lysine 205, glycine 296, glutamate 327, and glycine 353–threonine 356.

Belongs to the phosphoglycerate kinase family. As to quaternary structure, monomer.

Its subcellular location is the cytoplasm. The catalysed reaction is (2R)-3-phosphoglycerate + ATP = (2R)-3-phospho-glyceroyl phosphate + ADP. It participates in carbohydrate degradation; glycolysis; pyruvate from D-glyceraldehyde 3-phosphate: step 2/5. The sequence is that of Phosphoglycerate kinase from Sulfurimonas denitrificans (strain ATCC 33889 / DSM 1251) (Thiomicrospira denitrificans (strain ATCC 33889 / DSM 1251)).